The primary structure comprises 103 residues: Co-chaperonin GroES (103 aa).

This sequence belongs to the GroES chaperonin family. Heptamer of 7 subunits arranged in a ring. Interacts with the chaperonin GroEL.

Its subcellular location is the cytoplasm. Its function is as follows. Together with the chaperonin GroEL, plays an essential role in assisting protein folding. The GroEL-GroES system forms a nano-cage that allows encapsulation of the non-native substrate proteins and provides a physical environment optimized to promote and accelerate protein folding. GroES binds to the apical surface of the GroEL ring, thereby capping the opening of the GroEL channel. In Gloeothece citriformis (strain PCC 7424) (Cyanothece sp. (strain PCC 7424)), this protein is Co-chaperonin GroES.